Here is an 856-residue protein sequence, read N- to C-terminus: Leucine--tRNA ligase (856 aa).

A 'HIGH' region motif is present at residues 42–52; sequence PYPSGKLHMGH. Residues 615–619 carry the 'KMSKS' region motif; that stretch reads KMSKS. K618 contacts ATP.

The protein belongs to the class-I aminoacyl-tRNA synthetase family.

It is found in the cytoplasm. The enzyme catalyses tRNA(Leu) + L-leucine + ATP = L-leucyl-tRNA(Leu) + AMP + diphosphate. This is Leucine--tRNA ligase from Chromohalobacter salexigens (strain ATCC BAA-138 / DSM 3043 / CIP 106854 / NCIMB 13768 / 1H11).